Here is a 353-residue protein sequence, read N- to C-terminus: Nicotinate-nucleotide--dimethylbenzimidazole phosphoribosyltransferase (353 aa).

Glutamate 319 serves as the catalytic Proton acceptor.

The protein belongs to the CobT family.

It carries out the reaction 5,6-dimethylbenzimidazole + nicotinate beta-D-ribonucleotide = alpha-ribazole 5'-phosphate + nicotinate + H(+). Its pathway is nucleoside biosynthesis; alpha-ribazole biosynthesis; alpha-ribazole from 5,6-dimethylbenzimidazole: step 1/2. Its function is as follows. Catalyzes the synthesis of alpha-ribazole-5'-phosphate from nicotinate mononucleotide (NAMN) and 5,6-dimethylbenzimidazole (DMB). The protein is Nicotinate-nucleotide--dimethylbenzimidazole phosphoribosyltransferase of Prosthecochloris aestuarii (strain DSM 271 / SK 413).